A 393-amino-acid chain; its full sequence is Serine/threonine protein kinase AFUB_078980 (393 aa).

In terms of domain architecture, Protein kinase spans 61–390 (YQVLSKLGFG…APELLTDPWL (330 aa)). ATP-binding positions include 67-75 (LGFGANSTV) and lysine 90. Residue aspartate 190 is the Proton acceptor of the active site.

This sequence belongs to the protein kinase superfamily. CMGC Ser/Thr protein kinase family.

It carries out the reaction L-seryl-[protein] + ATP = O-phospho-L-seryl-[protein] + ADP + H(+). The enzyme catalyses L-threonyl-[protein] + ATP = O-phospho-L-threonyl-[protein] + ADP + H(+). Its function is as follows. Serine/threonine protein kinase; part of the subtelomeric hrmA-associated cluster (HAC) containing genes that alter the hyphal surface (such as reduced total chitin or increased beta-glucan exposure) and perturb inter-hyphal interactions within the developing biofilms, resulting in a loss of vertically aligned polarized growing filaments. Consequently, this hypoxia-typic morphotype (called H-MORPH) with altered biofilm architecture leads to increased hypoxia fitness, increased host inflammation, rapid disease progression, and mortality in a murine model of invasive aspergillosis. This Aspergillus fumigatus (strain CBS 144.89 / FGSC A1163 / CEA10) (Neosartorya fumigata) protein is Serine/threonine protein kinase AFUB_078980.